The following is a 202-amino-acid chain: Protease (202 aa).

Catalysis depends on residues His55, Asp72, and Cys122.

It belongs to the peptidase C5 family. In terms of assembly, interacts with protease cofactor pVI-C; this interaction is necessary for protease activation.

The protein localises to the virion. It localises to the host nucleus. The enzyme catalyses Cleaves proteins of the adenovirus and its host cell at two consensus sites: -Yaa-Xaa-Gly-Gly-|-Xaa- and -Yaa-Xaa-Gly-Xaa-|-Gly- (in which Yaa is Met, Ile or Leu, and Xaa is any amino acid).. With respect to regulation, requires DNA and protease cofactor for maximal activation. Inside nascent virions, becomes partially activated by binding to the viral DNA, allowing it to cleave the cofactor that binds to the protease and fully activates it. Actin, like the viral protease cofactor, seems to act as a cofactor in the cleavage of cytokeratin 18 and of actin itself. Functionally, cleaves viral precursor proteins (pTP, pIIIa, pVI, pVII, pVIII, and pX) inside newly assembled particles giving rise to mature virions. Protease complexed to its cofactor slides along the viral DNA to specifically locate and cleave the viral precursors. Mature virions have a weakened organization compared to the unmature virions, thereby facilitating subsequent uncoating. Without maturation, the particle lacks infectivity and is unable to uncoat. Late in adenovirus infection, in the cytoplasm, may participate in the cytoskeleton destruction. Cleaves host cell cytoskeletal keratins K7 and K18. The polypeptide is Protease (Bovine adenovirus 7 (BAdV-7)).